The primary structure comprises 2713 residues: Histone-lysine N-methyltransferase 2B (2713 aa).

A compositionally biased stretch (gly residues) spans 1 to 11 (MAAAAGGGSCP). Disordered stretches follow at residues 1–65 (MAAA…GEDT), 82–524 (RLWA…PTVV), and 542–783 (VSAR…ARVA). At alanine 2 the chain carries N-acetylalanine. Over residues 12 to 24 (GPGSARGRFPGRP) the composition is skewed to low complexity. The short motif at 17-36 (RGRFPGRPRGSGGGGGRGGR) is the Menin-binding motif (MBM) element. Gly residues-rich tracts occupy residues 25-38 (RGSGGGGGRGGRGN) and 49-60 (RGGGAAGPGGAE). A DNA-binding region (a.T hook 1) is located at residues 37–44 (GNGAERVR). Acidic residues predominate over residues 109-123 (PEEESSDGESEEEEF). Residues 110 to 117 (EEESSDGE) constitute a DNA-binding region (a.T hook 2). Serine 113, serine 114, and serine 118 each carry phosphoserine. Positions 144–158 (QRGRAPRGRGRKHKT) are enriched in basic residues. Basic and acidic residues predominate over residues 340-360 (PQRKDGDEPERGSCRKKQEQK). The segment at residues 357 to 365 (QEQKLEEEE) is a DNA-binding region (a.T hook 3). Acidic residues predominate over residues 361–393 (LEEEEEEEEKEGEEKEEKDDNEDNNKQEEEEET). The segment covering 394–412 (ERAVAEEEAMLAKEKEEAK) has biased composition (basic and acidic residues). The segment covering 414–460 (PSPPLTPPVPSPPPPLPPPSTSPPPPASPLPPPVSPPPPLSPPPYPA) has biased composition (pro residues). The span at 501 to 517 (GTLSPTPNPSTTTGSPL) shows a compositional bias: low complexity. The span at 555–566 (RFMDEDPPKPPK) shows a compositional bias: basic and acidic residues. A compositionally biased stretch (pro residues) spans 577–605 (ATSPPAPQEPVPVSSPPRVPTPPSTPVPL). Basic and acidic residues predominate over residues 606 to 617 (PEKRRSILREPT). The span at 627 to 645 (LPPPPPAPPPAPSPPPAPA) shows a compositional bias: pro residues. Low complexity-rich tracts occupy residues 646-657 (TPSRRPLLLRAP), 715-728 (VPVVTSPVKVEVPP), and 738-756 (QQLQLQQPPQALQTQLLPQ). Pro residues predominate over residues 757 to 774 (ALPPQQPQAQPPPSPQHT). A Glycyl lysine isopeptide (Lys-Gly) (interchain with G-Cter in SUMO2) cross-link involves residue lysine 810. 3 positions are modified to phosphoserine: serine 826, serine 849, and serine 866. Disordered regions lie at residues 831–872 (TEEA…QGPR) and 899–964 (SALP…HHGK). Residues 841 to 862 (TPDRGCVRSEDESMEAKRDRAS) are compositionally biased toward basic and acidic residues. Residues 912–922 (EDTSSASETES) are compositionally biased toward low complexity. Serine 941 is subject to Phosphoserine. The segment covering 953-964 (TPRRSLPSHHGK) has biased composition (basic residues). A CXXC-type zinc finger spans residues 964–1011 (KKMRMARCGHCRGCLRVQDCGSCVNCLDKPKFGGPNTKKQCCVYRKCD). Residues cysteine 971, cysteine 974, cysteine 977, cysteine 983, cysteine 986, cysteine 989, cysteine 1005, and cysteine 1010 each contribute to the Zn(2+) site. Disordered regions lie at residues 1032–1076 (LLPW…DSLL) and 1088–1138 (QRPS…LQPV). Phosphoserine is present on residues serine 1037, serine 1040, serine 1098, and serine 1101. Lysine 1142 participates in a covalent cross-link: Glycyl lysine isopeptide (Lys-Gly) (interchain with G-Cter in SUMO2). PHD-type zinc fingers lie at residues 1207-1258 (PMVC…CKFC), 1255-1309 (CKFC…CVRC), and 1341-1402 (GNYC…CAGA). A Bromo domain is found at 1410–1510 (ALSGALQGGL…GLLLKLLESA (101 aa)). The interval 1550–1572 (RQQESETPESGQPPGDPSAAFQS) is disordered. The C2HC pre-PHD-type zinc finger occupies 1584–1624 (PRQCALCLKYGDADSKEAGRLLYIGQNEWTHVNCAIWSAEV). Residues 1645–1692 (MRCELCLKPGATVGCCLSSCLSNFHFMCARASYCIFQDDKKVFCQKHT) form a PHD-type 4 zinc finger. The 57-residue stretch at 1733–1789 (VINVLIGSIRINSLGTLSDLSDCEGRLFPIGYQCSRLYWSTVDARRRCWYRCRILEY) folds into the FYR N-terminal domain. Residues 1808–1821 (QTIVHSPTPSSDTD) show a composition bias toward polar residues. 5 disordered regions span residues 1808 to 1973 (QTIV…GPDF), 2056 to 2104 (QLDG…PPED), 2116 to 2160 (NLGG…RTFA), 2279 to 2356 (VSTF…RCPL), and 2382 to 2408 (YSAGEASSSEEEPPSPEDKENQVPKRV). Low complexity-rich tracts occupy residues 1872-1890 (PLGGVSFGPLPSPGSPSSL) and 1923-1933 (RRTSSPLRTSP). Phosphoserine is present on residues serine 1926 and serine 1932. Over residues 1939–1950 (LSTSVTALTPTS) the composition is skewed to polar residues. Residues 2058 to 2068 (DGVDDGTDSEA) show a composition bias toward acidic residues. A phosphothreonine mark is found at threonine 2064 and threonine 2079. Over residues 2084–2093 (PGVGRGGVLG) the composition is skewed to gly residues. A compositionally biased stretch (polar residues) spans 2140–2153 (NGSQPPQSLSTSPA). 2 positions are modified to phosphoserine: serine 2286 and serine 2346. An FYR C-terminal domain is found at 2409-2490 (GPHLRFEISS…QRCQHYKFRY (82 aa)). A WDR5 interaction motif (WIN) motif is present at residues 2506-2511 (GAARAE). Residues 2573-2689 (EAVGVYRSAI…RGEELTYDYK (117 aa)) form the SET domain. S-adenosyl-L-methionine-binding positions include histidine 2583, arginine 2585, tyrosine 2627, and 2650–2651 (NH). Zn(2+)-binding residues include cysteine 2653 and cysteine 2701. Positions 2697 to 2713 (NKLPCNCGAKRCRRFLN) constitute a Post-SET domain. Asparagine 2702 lines the S-adenosyl-L-methionine pocket. 2 residues coordinate Zn(2+): cysteine 2703 and cysteine 2708.

It belongs to the class V-like SAM-binding methyltransferase superfamily. Histone-lysine methyltransferase family. TRX/MLL subfamily. As to quaternary structure, component of the menin-associated histone methyltransferase complex, at least composed of KMT2B/MLL4, ASH2L, RBBP5, WDR5, DPY30, MEN1; the complex interacts with POLR2A and POLR2B via MEN1. Interacts with NFE2. Interacts with KDM6B. Interacts (via WIN motif) with WDR5. Interacts (via MBM motif) with MEN1.

The protein resides in the nucleus. It catalyses the reaction L-lysyl(4)-[histone H3] + S-adenosyl-L-methionine = N(6)-methyl-L-lysyl(4)-[histone H3] + S-adenosyl-L-homocysteine + H(+). The enzyme catalyses N(6)-methyl-L-lysyl(4)-[histone H3] + S-adenosyl-L-methionine = N(6),N(6)-dimethyl-L-lysyl(4)-[histone H3] + S-adenosyl-L-homocysteine + H(+). Functionally, histone methyltransferase that catalyzes methyl group transfer from S-adenosyl-L-methionine to the epsilon-amino group of 'Lys-4' of histone H3 (H3K4) via a non-processive mechanism. Part of chromatin remodeling machinery predominantly forms H3K4me1 and H3K4me2 methylation marks at active chromatin sites where transcription and DNA repair take place. Likely plays a redundant role with KMT2C in enriching H3K4me1 marks on primed and active enhancer elements. Plays a central role in beta-globin locus transcription regulation by being recruited by NFE2. Plays an important role in controlling bulk H3K4me during oocyte growth and preimplantation development. Required during the transcriptionally active period of oocyte growth for the establishment and/or maintenance of bulk H3K4 trimethylation (H3K4me3), global transcriptional silencing that preceeds resumption of meiosis, oocyte survival and normal zygotic genome activation. In Mus musculus (Mouse), this protein is Histone-lysine N-methyltransferase 2B (Kmt2b).